The primary structure comprises 143 residues: Large ribosomal subunit protein uL16c (143 aa).

Belongs to the universal ribosomal protein uL16 family. Part of the 50S ribosomal subunit.

It is found in the plastid. Its subcellular location is the chloroplast. The chain is Large ribosomal subunit protein uL16c from Cyanidioschyzon merolae (strain NIES-3377 / 10D) (Unicellular red alga).